A 454-amino-acid chain; its full sequence is Protein IQ-DOMAIN 1 (454 aa).

The calmodulin-binding stretch occupies residues 103-113; sequence GKSKEEAAAIL. In terms of domain architecture, IQ spans 107–136; the sequence is EEAAAILIQSTFRGHLARRESQVMRGQERL. Positions 272-454 are disordered; it reads WESSEKEQNT…KGVLKAERTP (183 aa). Residues 280–328 show a composition bias toward polar residues; it reads NTTNNDNSSVKNSTNRNSQGGETAKSSNRNKLNSSTKPNTPSASSTATR. Over residues 343–356 the composition is skewed to basic and acidic residues; that stretch reads KSSDDEAKSSERNR. Residues 371 to 388 show a composition bias toward polar residues; it reads LSSSTARRSSNLIPTTKS. The span at 397-412 shows a compositional bias: low complexity; that stretch reads TSSRVAVTTSTTEESS. The Nuclear localization signal motif lies at 421–428; it reads KKRLSTSA. The segment covering 442-454 has biased composition (basic and acidic residues); the sequence is KVEKGVLKAERTP.

This sequence belongs to the IQD family. In terms of assembly, binds to multiple calmodulin (CaM) in the presence of Ca(2+)(e.g. CaM1 and CaM2) and CaM-like (e.g. CML8 and CML9) proteins. Interacts with KLCR1. Expressed in roots, flowers, stems, siliques, inflorescence stems and whole shoots. Restricted to the vascular bundles.

The protein resides in the nucleus. The protein localises to the nucleolus. It is found in the cytoplasm. It localises to the cytoskeleton. In terms of biological role, may be involved in cooperative interactions with calmodulins or calmodulin-like proteins. Modulates expression of glucosinolate pathway genes. May associate with nucleic acids and regulate gene expression at the transcriptional or post-transcriptional level. Recruits KLCR1 and calmodulin proteins to microtubules, thus being a potential scaffold in cellular signaling and trafficking. This Arabidopsis thaliana (Mouse-ear cress) protein is Protein IQ-DOMAIN 1.